A 362-amino-acid polypeptide reads, in one-letter code: Poly(rC)-binding protein 2 (362 aa).

2 KH domains span residues 13–75 (TLTI…FAMI) and 97–162 (PVTL…VKQI). K115 participates in a covalent cross-link: Glycyl lysine isopeptide (Lys-Gly) (interchain with G-Cter in SUMO2). S169 is modified (phosphoserine). Residue K181 forms a Glycyl lysine isopeptide (Lys-Gly) (interchain with G-Cter in SUMO2) linkage. S185 and S268 each carry phosphoserine. One can recognise a KH 3 domain in the interval 284-348 (TTSHELTIPN…ASISLAQYLI (65 aa)). K319 is covalently cross-linked (Glycyl lysine isopeptide (Lys-Gly) (interchain with G-Cter in SUMO2)). Residues S361 and S362 each carry the phosphoserine modification.

As to quaternary structure, identified in a mRNP complex, at least composed of DHX9, DDX3X, ELAVL1, HNRNPU, IGF2BP1, ILF3, PABPC1, PCBP2, PTBP2, STAU1, STAU2, SYNCRIP and YBX1. Interacts with IFIH1 and RNF135. Interacts with MAVS (via C-terminus) and ITCH (via WW domains). Interacts with CGAS; preventing the formation of liquid-like droplets in which CGAS is activated. In terms of processing, phosphorylated. The non-phosphorylated form(s) exhibited the strongest poly(rC)-binding activity.

The protein localises to the nucleus. It is found in the cytoplasm. In terms of biological role, single-stranded nucleic acid binding protein that binds preferentially to oligo dC. Major cellular poly(rC)-binding protein. Also binds poly(rU). Acts as a negative regulator of antiviral signaling. Negatively regulates cellular antiviral responses mediated by MAVS signaling. It acts as an adapter between MAVS and the E3 ubiquitin ligase ITCH, therefore triggering MAVS ubiquitination and degradation. Negativeley regulates the cGAS-STING pathway via interaction with CGAS, preventing the formation of liquid-like droplets in which CGAS is activated. Together with PCBP1, required for erythropoiesis, possibly by regulating mRNA splicing. The protein is Poly(rC)-binding protein 2 (Pcbp2) of Mus musculus (Mouse).